Reading from the N-terminus, the 557-residue chain is Protein NRT1/ PTR FAMILY 5.14 (557 aa).

Helical transmembrane passes span 35–55 (AALF…GIGS) and 78–98 (AWSG…DAFL). Residue T103 is modified to Phosphothreonine. A run of 10 helical transmembrane segments spans residues 104–124 (IIIS…SAFL), 133–153 (SSTS…VAIG), 183–203 (FFNW…LVVV), 209–229 (FSWA…LVLF), 320–340 (IPVW…MTFF), 357–377 (IPPA…VPIY), 401–421 (IGTG…VEFK), 443–463 (IWWL…TLVG), 479–499 (IGLA…SLLI), and 526–546 (YFYW…LFIS).

It belongs to the major facilitator superfamily. Proton-dependent oligopeptide transporter (POT/PTR) (TC 2.A.17) family. Expressed in roots.

It is found in the membrane. This is Protein NRT1/ PTR FAMILY 5.14 (NPF5.14) from Arabidopsis thaliana (Mouse-ear cress).